Reading from the N-terminus, the 300-residue chain is MAPPVTERWCLALILLFLSLFVQSSTAIYCGAEDCYALLGVAQDANASDIKRSYYKLSLQHHPDKNPDPESRKLFVKIATAYEILKDNTTRAQYDYAIEHPEEVFYNTAQYYRAKYGHKSDPRAVLVGLLVVLSAFQYLNNVARYNEAIATVKRTPAYKNKLKALELERTGGVSNKKKGSKQIDQKLQEELSNELDLQIKGAEKPSVWELLGVRFILLPYTIIKLLVWYSSWVWRYKVKKAPYSWEDASYLTRRSLSVPADAWANLDEYRKEDLVQKRLWEKQNLENYFAEMRKESKRRR.

The N-terminal stretch at 1–27 (MAPPVTERWCLALILLFLSLFVQSSTA) is a signal peptide. The Lumenal segment spans residues 28–122 (IYCGAEDCYA…RAKYGHKSDP (95 aa)). A J domain is found at 34-98 (DCYALLGVAQ…TTRAQYDYAI (65 aa)). 2 N-linked (GlcNAc...) asparagine glycosylation sites follow: N46 and N88. Residues 123-143 (RAVLVGLLVVLSAFQYLNNVA) form a helical membrane-spanning segment. Residues 144-206 (RYNEAIATVK…LQIKGAEKPS (63 aa)) are Cytoplasmic-facing. The helical transmembrane segment at 207 to 227 (VWELLGVRFILLPYTIIKLLV) threads the bilayer. At 228-300 (WYSSWVWRYK…EMRKESKRRR (73 aa)) the chain is on the lumenal side.

In terms of tissue distribution, expressed in leaves, flower buds and flowers.

The protein resides in the endoplasmic reticulum membrane. Its function is as follows. May play a role in protein folding in the endoplasmic reticulum. This is Chaperone protein dnaJ 50 (C50) from Arabidopsis thaliana (Mouse-ear cress).